A 77-amino-acid polypeptide reads, in one-letter code: MSGLGILVLTLLLLVYMATSHQDAGEKQATQRDAINVRRRRSLTRRVAEECEESCEDEEKHCCNTNNGPSCAPQCFG.

A signal peptide spans 1–18 (MSGLGILVLTLLLLVYMA). Positions 19–44 (TSHQDAGEKQATQRDAINVRRRRSLT) are excised as a propeptide. Cystine bridges form between C51-C63, C55-C71, and C62-C75. F76 bears the Phenylalanine amide mark.

Belongs to the conotoxin O3 superfamily. Expressed by the venom duct.

It is found in the secreted. In Conus arenatus (Sand-dusted cone), this protein is Conotoxin ArMSGL-0141.